A 357-amino-acid polypeptide reads, in one-letter code: MAEITAAMVKELRESTGAGMMDCKNALSETNGDFDKAVQLLREKGLGKAAKKADRLAAEGLVSVKVSDDFTSATVSEINSETDFVAKNDQFIALTKDTTAHIQSNSLQSVEELHSSIINGVKFEEYLKSQIATIGENLVVRRFATLKAGANGVVNGYIHTNGRVGVVIAAACDSAEVASKSRDLLRQICMHIAAMRPSYLSYEDLDMTFVENEYKALVAELEKENEERRRLKDPNKPEHKIPQFASRKQLSDAILKEAEEKIKEELKAQGKPEKIWDNIIPGKMNSFIADNSQLDSKLTLMGQFYVMDDKKTVEQVIAEKEKEFGGKIKIVEFICFEVGEGLEKKTEDFAAEVAAQL.

An involved in Mg(2+) ion dislocation from EF-Tu region spans residues 82–85 (TDFV).

It belongs to the EF-Ts family.

Its subcellular location is the cytoplasm. Its function is as follows. Associates with the EF-Tu.GDP complex and induces the exchange of GDP to GTP. It remains bound to the aminoacyl-tRNA.EF-Tu.GTP complex up to the GTP hydrolysis stage on the ribosome. The protein is Elongation factor Ts of Campylobacter jejuni subsp. jejuni serotype O:6 (strain 81116 / NCTC 11828).